The sequence spans 725 residues: FYVE, RhoGEF and PH domain-containing protein 3 (725 aa).

The tract at residues 1–151 (MESGRGSSTP…KADKDAGLAQ (151 aa)) is disordered. Over residues 124–136 (EEADSDVGEEPDS) the composition is skewed to acidic residues. At Ser128 the chain carries Phosphoserine. The DH domain maps to 157 to 341 (KLLHIAQELL…STAANHSNAA (185 aa)). The PH 1 domain occupies 370–469 (ELIKEGQIQK…WIQIIQATIE (100 aa)). A disordered region spans residues 487 to 532 (QDEDPSLSPDMPITSTSPVEPVVTTEGSSGAAGLEPRKLSSKTRRD). The segment covering 500–512 (TSTSPVEPVVTTE) has biased composition (low complexity). The segment covering 521–532 (EPRKLSSKTRRD) has biased composition (basic and acidic residues). The FYVE-type zinc finger occupies 532-588 (DKEKQSCKSCGETFNSITKRRHHCKLCGAVICGKCSEFKAENSRQSRVCRDCFLTQP). Cys538, Cys541, Cys555, Cys558, Cys563, Cys566, Cys580, and Cys583 together coordinate Zn(2+). Residues 604 to 703 (PSLLCGPLRL…WLETLSTAAH (100 aa)) form the PH 2 domain. A disordered region spans residues 703 to 725 (HGDTAQDSPGALQLQVPMGAAAP).

It is found in the cytoplasm. Its subcellular location is the cytoskeleton. Its function is as follows. Promotes the formation of filopodia. May activate CDC42, a member of the Ras-like family of Rho- and Rac proteins, by exchanging bound GDP for free GTP. Plays a role in regulating the actin cytoskeleton and cell shape. In Homo sapiens (Human), this protein is FYVE, RhoGEF and PH domain-containing protein 3 (FGD3).